Here is a 244-residue protein sequence, read N- to C-terminus: Inactive chemokine-binding protein (244 aa).

Positions 1-79 are disordered; it reads MHVPASLQQS…STSVEDVDPP (79 aa). Polar residues predominate over residues 37-53; it reads QDQTPTNDKICQSVTEI. The span at 54-77 shows a compositional bias: acidic residues; it reads TESESDPDPEVESEDDSTSVEDVD.

The protein belongs to the orthopoxvirus OPG001 family.

The protein localises to the host cytoplasm. Functionally, the protein is truncated in this vaccinal strain and presumably inactive, because the lack of signal peptide prevents the protein of being secreted. In the wild-type viruses inhibits host immune defense by binding to host chemokines. Binds host CC chemokines (beta chemokines) such as RANTES with high affinity, but not CXC or C chemokines (alpha and gamma chemokines). The protein is Inactive chemokine-binding protein (OPG001) of Vaccinia virus (strain Western Reserve) (VACV).